The chain runs to 386 residues: All-trans-retinol dehydrogenase [NAD(+)] ADH7 (386 aa).

Residue cysteine 59 participates in Zn(2+) binding. Residue 60 to 64 (RTDDH) coordinates NAD(+). 6 residues coordinate Zn(2+): histidine 80, cysteine 110, cysteine 113, cysteine 116, cysteine 124, and cysteine 186. NAD(+) is bound by residues 211-216 (GLGGVG), aspartate 235, lysine 240, 281-283 (IGH), 304-306 (VGV), 329-331 (CVF), and arginine 381.

It belongs to the zinc-containing alcohol dehydrogenase family. Class-IV subfamily. As to quaternary structure, homodimer. It depends on Zn(2+) as a cofactor. In terms of tissue distribution, preferentially expressed in stomach.

Its subcellular location is the cytoplasm. The catalysed reaction is a primary alcohol + NAD(+) = an aldehyde + NADH + H(+). It carries out the reaction 10-hydroxydecanoate + NAD(+) = 10-oxodecanoate + NADH + H(+). The enzyme catalyses all-trans-retinol + NAD(+) = all-trans-retinal + NADH + H(+). It catalyses the reaction 9-cis-retinol + NAD(+) = 9-cis-retinal + NADH + H(+). The catalysed reaction is all-trans-3,4-didehydroretinol + NAD(+) = all-trans-3,4-didehydroretinal + NADH + H(+). It carries out the reaction all-trans-4-hydroxyretinol + NAD(+) = all-trans-4-hydroxyretinal + NADH + H(+). The enzyme catalyses all-trans-4-oxoretinol + NAD(+) = all-trans-4-oxoretinal + NADH + H(+). It catalyses the reaction 12-hydroxydodecanoate + NAD(+) = 12-oxododecanoate + NADH + H(+). The catalysed reaction is 16-hydroxyhexadecanoate + NAD(+) = 16-oxohexadecanoate + NADH + H(+). It carries out the reaction hexan-1-ol + NAD(+) = hexanal + NADH + H(+). The enzyme catalyses (E)-hex-2-en-1-ol + NAD(+) = (E)-hex-2-enal + NADH + H(+). It catalyses the reaction (E)-4-hydroxynon-2-en-1-ol + NAD(+) = (E)-4-hydroxynon-2-enal + NADH + H(+). Retinol oxidation is inhibited by the detergent Tween 80. Ethanol inhibits both all-trans-retinol and 9-cis-retinol oxidation. 13-cis-retinol is an effective competitive inhibitor of the 9-cis-retinol oxidation. All-trans-retinoic acid is a powerful inhibitor of all-trans-retinol oxidation. 13-cis-retinoic acid is a powerful inhibitor of all-trans-retinol oxidation. Cimetidine competitively inhibited ethanol oxidation. Catalyzes the NAD-dependent oxidation of all-trans-retinol, alcohol, and omega-hydroxy fatty acids and their derivatives. Oxidizes preferentially all trans-retinol, all-trans-4-hydroxyretinol, 9-cis-retinol, 2-hexenol, and long chain omega-hydroxy fatty acids such as juniperic acid. In vitro can also catalyze the NADH-dependent reduction of all-trans-retinal and aldehydes and their derivatives. Reduces preferentially all trans-retinal, all-trans-4-oxoretinal and hexanal. Catalyzes in the oxidative direction with higher efficiency. Therefore may participate in retinoid metabolism, fatty acid omega-oxidation, and elimination of cytotoxic aldehydes produced by lipid peroxidation. In Homo sapiens (Human), this protein is All-trans-retinol dehydrogenase [NAD(+)] ADH7.